The primary structure comprises 867 residues: Leucine--tRNA ligase (867 aa).

The 'HIGH' region motif lies at 42-52 (PYPSGNLHMGH). The 'KMSKS' region signature appears at 625-629 (KMSKS). Lys-628 serves as a coordination point for ATP.

It belongs to the class-I aminoacyl-tRNA synthetase family.

Its subcellular location is the cytoplasm. The enzyme catalyses tRNA(Leu) + L-leucine + ATP = L-leucyl-tRNA(Leu) + AMP + diphosphate. The sequence is that of Leucine--tRNA ligase from Blochmanniella floridana.